The primary structure comprises 338 residues: Aspartate carbamoyltransferase catalytic subunit (338 aa).

Carbamoyl phosphate is bound by residues Arg72 and Thr73. Lys100 is an L-aspartate binding site. Arg122, His152, and Gln155 together coordinate carbamoyl phosphate. L-aspartate contacts are provided by Arg186 and Arg243. Residues Gly284 and Pro285 each coordinate carbamoyl phosphate.

It belongs to the aspartate/ornithine carbamoyltransferase superfamily. ATCase family. In terms of assembly, heterododecamer (2C3:3R2) of six catalytic PyrB chains organized as two trimers (C3), and six regulatory PyrI chains organized as three dimers (R2).

The catalysed reaction is carbamoyl phosphate + L-aspartate = N-carbamoyl-L-aspartate + phosphate + H(+). It participates in pyrimidine metabolism; UMP biosynthesis via de novo pathway; (S)-dihydroorotate from bicarbonate: step 2/3. In terms of biological role, catalyzes the condensation of carbamoyl phosphate and aspartate to form carbamoyl aspartate and inorganic phosphate, the committed step in the de novo pyrimidine nucleotide biosynthesis pathway. The sequence is that of Aspartate carbamoyltransferase catalytic subunit from Acinetobacter baylyi (strain ATCC 33305 / BD413 / ADP1).